The chain runs to 324 residues: tRNA U34 carboxymethyltransferase (324 aa).

Residues Lys-91, Trp-105, Lys-110, Gly-130, 152–154 (DPS), 181–182 (IE), Met-196, Tyr-200, and Arg-315 each bind carboxy-S-adenosyl-L-methionine.

Belongs to the class I-like SAM-binding methyltransferase superfamily. CmoB family. Homotetramer.

The enzyme catalyses carboxy-S-adenosyl-L-methionine + 5-hydroxyuridine(34) in tRNA = 5-carboxymethoxyuridine(34) in tRNA + S-adenosyl-L-homocysteine + H(+). Catalyzes carboxymethyl transfer from carboxy-S-adenosyl-L-methionine (Cx-SAM) to 5-hydroxyuridine (ho5U) to form 5-carboxymethoxyuridine (cmo5U) at position 34 in tRNAs. This chain is tRNA U34 carboxymethyltransferase, found in Photobacterium profundum (strain SS9).